A 667-amino-acid polypeptide reads, in one-letter code: Small ribosomal subunit protein mS39 (667 aa).

The transit peptide at 1-11 (MASSCSQALRH) directs the protein to the mitochondrion. The segment at 199-226 (EAEQRSEEMEDIQDETQTKKGRSPKASD) is disordered. 6 PPR repeats span residues 249–283 (NTRSYSALIRGMVKHAAYTQAFSTYTDLLNNRLKA), 284–323 (DVHIFNALLAAVPAVRPKYNEKWELILDLLKQMAEQKVKP), 324–360 (NLLTLNAILKSLRRCGALGRSQAFPVISEMKVLSIEP), 361–400 (SLASYNHLLAIFYRSGAQVQTPTDVLVEVMNEVSGKSFTP), 482–516 (SSNAMSDLLRALDTDSRLDLIPKIWKDMKQLGHGN), and 565–599 (TASSLSDVTTILLAANRKQEAWEMLKLFRTHNRVP).

Belongs to the mitochondrion-specific ribosomal protein mS39 family.

Its subcellular location is the mitochondrion. Functionally, mitochondrial RNA-binding protein that may have a role in mitochondrial translation. This chain is Small ribosomal subunit protein mS39 (ptcd3), found in Danio rerio (Zebrafish).